The primary structure comprises 359 residues: Heat-inducible transcription repressor HrcA (359 aa).

It belongs to the HrcA family.

Its function is as follows. Negative regulator of class I heat shock genes (grpE-dnaK-dnaJ and groELS operons). Prevents heat-shock induction of these operons. In Sinorhizobium fredii (strain NBRC 101917 / NGR234), this protein is Heat-inducible transcription repressor HrcA.